The sequence spans 478 residues: Lipoprotein lipase (478 aa).

The signal sequence occupies residues 1 to 28 (MESKALLLLALSVCLQSLTVSRGGLVAA). An interaction with GPIHBP1 region spans residues 35 to 56 (KDFRDIESKFALRTPEDTAEDT). Cys-57 and Cys-70 are joined by a disulfide. A glycan (N-linked (GlcNAc...) asparagine) is linked at Asn-73. The residue at position 124 (Tyr-124) is a 3'-nitrotyrosine. Ser-162 acts as the Nucleophile in catalysis. Asp-186 (charge relay system) is an active-site residue. The residue at position 194 (Tyr-194) is a 3'-nitrotyrosine. Positions 197, 200, 202, and 205 each coordinate Ca(2+). Cys-246 and Cys-269 are disulfide-bonded. Residues 246 to 269 (CNIGEALRVIAERGLGDVDQLVKC) form an essential for determining substrate specificity region. His-271 serves as the catalytic Charge relay system. An N-linked (GlcNAc...) asparagine glycan is attached at Asn-287. 2 cysteine pairs are disulfide-bonded: Cys-294-Cys-313 and Cys-305-Cys-308. In terms of domain architecture, PLAT spans 344–467 (FHYQVKIHFS…KGKSPVIFVK (124 aa)). Tyr-346 carries the 3'-nitrotyrosine modification. N-linked (GlcNAc...) asparagine glycosylation occurs at Asn-389. Residues 420–424 (WSNWW) are important for interaction with lipoprotein particles. The important for heparin binding stretch occupies residues 433-437 (KIRVK). Positions 446 to 470 (IFCSREKMSYLQKGKSPVIFVKCHD) are interaction with GPIHBP1. Cys-448 and Cys-468 form a disulfide bridge.

This sequence belongs to the AB hydrolase superfamily. Lipase family. Homodimer. Interacts with GPIHBP1 with 1:1 stoichiometry. Interacts with APOC2; the interaction activates LPL activity in the presence of lipids. Interaction with heparan sulfate proteoglycans is required to protect LPL against loss of activity. Associates with lipoprotein particles in blood plasma. Interacts with LMF1 and SEL1L; interaction with SEL1L is required to prevent aggregation of newly synthesized LPL in the endoplasmic reticulum (ER), and for normal export of LPL from the ER to the extracellular space. Interacts with SORL1; SORL1 acts as a sorting receptor, promoting LPL localization to endosomes and later to lysosomes, leading to degradation of newly synthesized LPL. In terms of processing, tyrosine nitration after lipopolysaccharide (LPS) challenge down-regulates the lipase activity. In terms of tissue distribution, detected in milk (at protein level).

It is found in the cell membrane. The protein localises to the secreted. The protein resides in the extracellular space. Its subcellular location is the extracellular matrix. The catalysed reaction is a triacylglycerol + H2O = a diacylglycerol + a fatty acid + H(+). It carries out the reaction a 1,2-diacyl-sn-glycero-3-phosphocholine + H2O = a 2-acyl-sn-glycero-3-phosphocholine + a fatty acid + H(+). It catalyses the reaction 1,2,3-tri-(9Z-octadecenoyl)-glycerol + H2O = di-(9Z)-octadecenoylglycerol + (9Z)-octadecenoate + H(+). The enzyme catalyses 1,2-di-(9Z-octadecenoyl)-sn-glycero-3-phosphocholine + H2O = (9Z-octadecenoyl)-sn-glycero-3-phosphocholine + (9Z)-octadecenoate + H(+). The catalysed reaction is 1,2,3-tributanoylglycerol + H2O = dibutanoylglycerol + butanoate + H(+). It carries out the reaction 1,2-dihexadecanoyl-sn-glycero-3-phosphocholine + H2O = hexadecanoyl-sn-glycero-3-phosphocholine + hexadecanoate + H(+). With respect to regulation, the apolipoprotein APOC2 acts as a coactivator of LPL activity. Ca(2+) binding promotes protein stability and formation of the active homodimer. Interaction with GPIHBP1 protects LPL against inactivation by ANGPTL4. In terms of biological role, key enzyme in triglyceride metabolism. Catalyzes the hydrolysis of triglycerides from circulating chylomicrons and very low density lipoproteins (VLDL), and thereby plays an important role in lipid clearance from the blood stream, lipid utilization and storage. Although it has both phospholipase and triglyceride lipase activities it is primarily a triglyceride lipase with low but detectable phospholipase activity. Mediates margination of triglyceride-rich lipoprotein particles in capillaries. Recruited to its site of action on the luminal surface of vascular endothelium by binding to GPIHBP1 and cell surface heparan sulfate proteoglycans. This chain is Lipoprotein lipase (LPL), found in Bos taurus (Bovine).